A 430-amino-acid polypeptide reads, in one-letter code: Protein translocase subunit SecY (430 aa).

Helical transmembrane passes span 18-38, 68-88, 117-137, 147-167, 179-199, 217-237, 269-289, 308-328, 368-388, and 389-409; these read IFFT…PAPG, FSIF…MQLL, LAIS…NNYL, IMSY…LIWL, GISI…LIQF, VLGL…VLEA, GVIP…LTLF, NVGM…YAFV, FVGS…TKFM, and GLPQ…GVAI.

The protein belongs to the SecY/SEC61-alpha family. Component of the Sec protein translocase complex. Heterotrimer consisting of SecY, SecE and SecG subunits. The heterotrimers can form oligomers, although 1 heterotrimer is thought to be able to translocate proteins. Interacts with the ribosome. Interacts with SecDF, and other proteins may be involved. Interacts with SecA.

The protein localises to the cell membrane. Functionally, the central subunit of the protein translocation channel SecYEG. Consists of two halves formed by TMs 1-5 and 6-10. These two domains form a lateral gate at the front which open onto the bilayer between TMs 2 and 7, and are clamped together by SecE at the back. The channel is closed by both a pore ring composed of hydrophobic SecY resides and a short helix (helix 2A) on the extracellular side of the membrane which forms a plug. The plug probably moves laterally to allow the channel to open. The ring and the pore may move independently. This chain is Protein translocase subunit SecY, found in Staphylococcus aureus (strain NCTC 8325 / PS 47).